A 599-amino-acid polypeptide reads, in one-letter code: CAP-Gly domain-containing linker protein 4 (599 aa).

3 ANK repeats span residues threonine 65–aspartate 101, threonine 149–alanine 180, and asparagine 186–phenylalanine 215. The region spanning glycine 303–proline 345 is the CAP-Gly 1 domain. Residues serine 387–glutamate 482 form a disordered region. Residues leucine 443–serine 462 show a composition bias toward low complexity. The span at leucine 468 to asparagine 478 shows a compositional bias: polar residues. In terms of domain architecture, CAP-Gly 2 spans glycine 505–proline 547. Phosphoserine is present on serine 557. The segment at serine 565 to lysine 599 is disordered. A compositionally biased stretch (low complexity) spans phenylalanine 576–serine 587.

In Rattus norvegicus (Rat), this protein is CAP-Gly domain-containing linker protein 4 (Clip4).